Reading from the N-terminus, the 498-residue chain is Cytochrome P450 monooxygenase ltmP (498 aa).

The first 21 residues, 1–21, serve as a signal peptide directing secretion; it reads MLMLHAVPVGICLLLWYVVYG. Residue Asn-420 is glycosylated (N-linked (GlcNAc...) asparagine). A heme-binding site is contributed by Cys-435.

Belongs to the cytochrome P450 family. The cofactor is heme.

It functions in the pathway secondary metabolite biosynthesis. Cytochrome P450 monooxygenase; part of the gene clusters that mediates the biosynthesis of lolitrems, indole-diterpene mycotoxins that are potent tremorgens in mammals, and are synthesized by clavicipitaceous fungal endophytes in association with their grass hosts. The geranylgeranyl diphosphate (GGPP) synthase ltmG is proposed to catalyze the first step in lolitrem biosynthesis. LtmG catalyzes a series of iterative condensations of isopentenyl diphosphate (IPP) with dimethylallyl diphosphate (DMAPP), geranyl diphosphate (GPP), and farnesyl diphosphate (FPP), to form GGPP. GGPP then condenses with indole-3-glycerol phosphate to form 3-geranylgeranylindole, an acyclic intermediate, to be incorporated into paxilline. Either ltmG or ltmC could be responsible for this step, as both are putative prenyl transferases. The FAD-dependent monooxygenase ltmM then catalyzes the epoxidation of the two terminal alkenes of the geranylgeranyl moiety, which is subsequently cyclized by ltmB, to paspaline. The cytochrome P450 monooxygenases ltmQ and ltmP can sequentially oxidize paspaline to terpendole E and terpendole F. Alternatively, ltmP converts paspaline to an intermediate which is oxidized by ltmQ to terpendole F. LtmF, ltmK, ltmE and ltmJ appear to be unique to the epichloe endophytes. The prenyltransferase ltmF is involved in the 27-hydroxyl-O-prenylation. The cytochrome P450 monooxygenase ltmK is required for the oxidative acetal ring formation. The multi-functional prenyltransferase ltmE is required for C20- and C21-prenylations of the indole ring of paspalanes and acts together with the cytochrome P450 monooxygenase ltmJ to yield lolitremanes by multiple oxidations and ring closures. The stereoisomer pairs of lolitriol and lolitrem N or lolitrem B and lolitrem F may be attributed to variations in the way in which ring closure can occur under the action of ltmJ. While the major product of this pathway is lolitrem B, the prenyl transferases and cytochrome P450 monooxygenases identified in this pathway have a remarkable versatility in their regio- and stereo-specificities to generate a diverse range of metabolites that are products of a metabolic grid rather than a linear pathway. This Epichloe festucae var. lolii (Neotyphodium lolii) protein is Cytochrome P450 monooxygenase ltmP.